The chain runs to 289 residues: ATP synthase gamma chain (289 aa).

Belongs to the ATPase gamma chain family. In terms of assembly, F-type ATPases have 2 components, CF(1) - the catalytic core - and CF(0) - the membrane proton channel. CF(1) has five subunits: alpha(3), beta(3), gamma(1), delta(1), epsilon(1). CF(0) has three main subunits: a, b and c.

It is found in the cell inner membrane. In terms of biological role, produces ATP from ADP in the presence of a proton gradient across the membrane. The gamma chain is believed to be important in regulating ATPase activity and the flow of protons through the CF(0) complex. This Acinetobacter baumannii (strain AB307-0294) protein is ATP synthase gamma chain.